The sequence spans 708 residues: Homeobox-leucine zipper protein HDG10 (708 aa).

Positions 1–24 are disordered; sequence MDSSHNDSSSDEEGIDSNNRRHHS. The homeobox DNA-binding region spans 16–75; the sequence is DSNNRRHHSNHQVQRLEAFFHECPHPDDSQRRQLGNELNLKHKQIKFWFQNRRTQARIHN. The stretch at 119 to 141 forms a coiled coil; the sequence is LCNLQKLRTKNVILKTEYERLSS. Residues 162 to 188 are disordered; the sequence is GPSTYGSTSNNRPASYGSSSNHLPQQS. Residues 165-188 are compositionally biased toward polar residues; that stretch reads TYGSTSNNRPASYGSSSNHLPQQS. The region spanning 218–456 is the START domain; the sequence is SQLEKNRMFE…LQRMCERLSL (239 aa).

Belongs to the HD-ZIP homeobox family. Class IV subfamily. As to quaternary structure, interacts with ANT, BBM and AIL1. In terms of tissue distribution, expressed in exclusively in anthers with highest levels in the tapetum and pollen grains.

Its subcellular location is the nucleus. Its function is as follows. Probable transcription factor. This Arabidopsis thaliana (Mouse-ear cress) protein is Homeobox-leucine zipper protein HDG10.